Reading from the N-terminus, the 703-residue chain is MNDLNDFLKTILLSFIFFLLLSLPTVAEADVTNKVNYSKDVIYQIVTDRFSDGNPGNNPSGAIFSQNCIDLHKYCGGDWQGIIDKINDGYLTDLGITALWISQPVENVYALHPSGYTSYHGYWARDYKKTNPYYGNFDDFDRLMSTAHSNGIKVIMDFTPNHSSPALETNPNYVENGAIYDNGALLGNYSNDQQNLFHHNGGTDFSSYEDSIYRNLYDLADYDLNNTVMDQYLKESIKFWLDKGIDGIRVDAVKHMSEGWQTSLMSEIYSHKPVFTFGEWFLGSGEVDPQNHHFANESGMSLLDFQFGQTIRNVLKDRTSNWYDFNEMITSTEKEYNEVIDQVTFIDNHDMSRFSVGSSSNRQTDMALAVLLTSRGVPTIYYGTEQYVTGGNDPENRKPLKTFDRSTNSYQIISKLASLRQTNSALGYGTTTERWLNEDIYIYERTFGNSIVLTAVNSSNSNQTITNLNTSLPQGNYTDELQQRLDGNTITVNANGAVNSFQLRANSVAVWQVSNPSTSPLIGQVGPMMGKAGNTITVSGEGFGDERGSVLFDSTSSEIISWSNTKISVKVPNVAGGYYDLSVVTAANIKSPTYKEFEVLSGNQVSVRFGVNNATTSPGTNLYIVGNVNELGNWDADKAIGPMFNQVMYQYPTWYYDISVPAGKNLEYKYIKKDQNGNVVWQSGNNRTYTSPTTGTDTVMINW.

The N-terminal stretch at 1–29 (MNDLNDFLKTILLSFIFFLLLSLPTVAEA) is a signal peptide. The A1 stretch occupies residues 30–160 (DVTNKVNYSK…GIKVIMDFTP (131 aa)). 4 residues coordinate Ca(2+): aspartate 52, asparagine 54, asparagine 57, and asparagine 58. The cysteines at positions 68 and 75 are disulfide-linked. Residues glycine 76 and aspartate 78 each coordinate Ca(2+). Position 122-123 (122-123 (YW)) interacts with substrate. Ca(2+) is bound at residue asparagine 161. Positions 161–224 (NHSSPALETN…NLYDLADYDL (64 aa)) are b. Histidine 162 serves as a coordination point for substrate. Residue isoleucine 212 coordinates Ca(2+). A substrate-binding site is contributed by 215–218 (NLYD). Aspartate 221 lines the Ca(2+) pocket. Positions 225-428 (NNTVMDQYLK…LRQTNSALGY (204 aa)) are A2. Arginine 249 provides a ligand contact to substrate. The Nucleophile role is filled by aspartate 251. 254–255 (KH) contributes to the substrate binding site. Histidine 255 lines the Ca(2+) pocket. The active-site Proton donor is the glutamate 279. Substrate is bound by residues histidine 349, aspartate 393, and arginine 397. A c region spans residues 429-516 (GTTTERWLNE…SVAVWQVSNP (88 aa)). Residues 517 to 600 (STSPLIGQVG…SPTYKEFEVL (84 aa)) are d. The IPT/TIG domain maps to 520-598 (PLIGQVGPMM…IKSPTYKEFE (79 aa)). The 105-residue stretch at 599–703 (VLSGNQVSVR…TGTDTVMINW (105 aa)) folds into the CBM20 domain. The interval 601 to 703 (SGNQVSVRFG…TGTDTVMINW (103 aa)) is e.

This sequence belongs to the glycosyl hydrolase 13 family. As to quaternary structure, monomer. Requires Ca(2+) as cofactor.

The protein resides in the secreted. The catalysed reaction is Cyclizes part of a (1-&gt;4)-alpha-D-glucan chain by formation of a (1-&gt;4)-alpha-D-glucosidic bond.. This chain is Cyclomaltodextrin glucanotransferase (cgt), found in Bacillus sp. (strain 1-1).